The sequence spans 563 residues: Urocanate hydratase (563 aa).

Residues 53–54, Gln-131, 177–179, Glu-197, Arg-202, 243–244, 264–268, 274–275, and Tyr-323 contribute to the NAD(+) site; these read GG, GMG, NA, QTSAH, and YL. Cys-411 is an active-site residue. Gly-493 is a binding site for NAD(+).

This sequence belongs to the urocanase family. NAD(+) serves as cofactor.

The protein localises to the cytoplasm. The enzyme catalyses 4-imidazolone-5-propanoate = trans-urocanate + H2O. Its pathway is amino-acid degradation; L-histidine degradation into L-glutamate; N-formimidoyl-L-glutamate from L-histidine: step 2/3. Its function is as follows. Catalyzes the conversion of urocanate to 4-imidazolone-5-propionate. The chain is Urocanate hydratase from Yersinia pestis bv. Antiqua (strain Antiqua).